The chain runs to 455 residues: Enolase (455 aa).

Position 166 (Q166) interacts with (2R)-2-phosphoglycerate. The active-site Proton donor is E208. The Mg(2+) site is built by D249, E311, and D338. The (2R)-2-phosphoglycerate site is built by K363, R392, S393, and K414. The active-site Proton acceptor is the K363.

The protein belongs to the enolase family. Mg(2+) serves as cofactor.

It is found in the cytoplasm. It localises to the secreted. The protein resides in the cell surface. The enzyme catalyses (2R)-2-phosphoglycerate = phosphoenolpyruvate + H2O. It functions in the pathway carbohydrate degradation; glycolysis; pyruvate from D-glyceraldehyde 3-phosphate: step 4/5. In terms of biological role, catalyzes the reversible conversion of 2-phosphoglycerate (2-PG) into phosphoenolpyruvate (PEP). It is essential for the degradation of carbohydrates via glycolysis. The chain is Enolase from Mycoplasma mobile (strain ATCC 43663 / 163K / NCTC 11711) (Mesomycoplasma mobile).